The chain runs to 140 residues: Midkine (140 aa).

A signal peptide spans 1-22 (MQHRGFFLLALLALLVVTSAVA). Cystine bridges form between cysteine 34–cysteine 58, cysteine 42–cysteine 67, cysteine 49–cysteine 71, cysteine 81–cysteine 113, and cysteine 91–cysteine 123.

Belongs to the pleiotrophin family. In terms of assembly, homodimer. Interacts with ALK. Interacts with LRP1; promotes neuronal survival. Interacts with LRP2. Interacts with NCAM1. Interacts (via C-terminal) with PTPRZ1 (via chondroitin sulfate chains); this interaction is inhibited by PTN; this interaction promotes neuronal migration. Interacts with NCL; this interaction promotes NCL clustering and lateral movements of this complex into lipid rafts leading to MDK internalization. Interacts with LRP6 and LRP8: this interaction is calcium dependent. Interacts with ITGA4. Interacts with ITGA6. Interacts with ITGB1. Interacts with ITGA4:ITGB1 complex; this interaction mediates MDK-induced osteoblast cells migration through PXN phosphorylation. Interacts with ITGA6:ITGB1 complex; this interaction mediates MDK-induced neurite outgrowth. Interacts with NOTCH2; this interactio mediates a nuclear accumulation of NOTCH2 and therefore activation of NOTCH2 signaling leading to interaction between HES1 and STAT3. Interacts with GPC2 (via heparan sulfate chain); this interaction is inhibited by heparin followed by chondroitin sulfate E; this interaction induces GPC2 clustering through heparan sulfate chain; this interaction induces neuronal cell adhesion and neurite outgrowth. Interacts with SDC3; this interaction induces SDC3 clustering; this interaction induces neuronal cell adhesion and neurite outgrowth. Interacts with SDC1. Interacts with CSPG5; this interaction promotes elongation of oligodendroglial precursor-like cells. Expressed in the follicular epithelium and granulosa cells of the ovary.

The protein resides in the secreted. Functionally, secreted protein that functions as a cytokine and growth factor and mediates its signal through cell-surface proteoglycan and non-proteoglycan receptors. Binds cell-surface proteoglycan receptors via their chondroitin sulfate (CS) groups. Thereby regulates many processes like inflammatory response, cell proliferation, cell adhesion, cell growth, cell survival, tissue regeneration, cell differentiation and cell migration. Participates in inflammatory processes by exerting two different activities. Firstly, mediates neutrophils and macrophages recruitment to the sites of inflammation both by direct action by cooperating namely with ITGB2 via LRP1 and by inducing chemokine expression. This inflammation can be accompanied by epithelial cell survival and smooth muscle cell migration after renal and vessel damage, respectively. Secondly, suppresses the development of tolerogenic dendric cells thereby inhibiting the differentiation of regulatory T cells and also promote T cell expansion through NFAT signaling and Th1 cell differentiation. Promotes tissue regeneration after injury or trauma. After heart damage negatively regulates the recruitment of inflammatory cells and mediates cell survival through activation of anti-apoptotic signaling pathways via MAPKs and AKT pathways through the activation of angiogenesis. Also facilitates liver regeneration as well as bone repair by recruiting macrophage at trauma site and by promoting cartilage development by facilitating chondrocyte differentiation. Plays a role in brain by promoting neural precursor cells survival and growth through interaction with heparan sulfate proteoglycans. Binds PTPRZ1 and promotes neuronal migration and embryonic neurons survival. Binds SDC3 or GPC2 and mediates neurite outgrowth and cell adhesion. Binds chondroitin sulfate E and heparin leading to inhibition of neuronal cell adhesion induced by binding with GPC2. Binds CSPG5 and promotes elongation of oligodendroglial precursor-like cells. Also binds ITGA6:ITGB1 complex; this interaction mediates MDK-induced neurite outgrowth. Binds LRP1; promotes neuronal survival. Binds ITGA4:ITGB1 complex; this interaction mediates MDK-induced osteoblast cells migration through PXN phosphorylation. Binds anaplastic lymphoma kinase (ALK) which induces ALK activation and subsequent phosphorylation of the insulin receptor substrate (IRS1), followed by the activation of mitogen-activated protein kinase (MAPK) and PI3-kinase, and the induction of cell proliferation. Promotes epithelial to mesenchymal transition through interaction with NOTCH2. During arteriogenesis, plays a role in vascular endothelial cell proliferation by inducing VEGFA expression and release which in turn induces nitric oxide synthase expression. Moreover activates vasodilation through nitric oxide synthase activation. Negatively regulates bone formation in response to mechanical load by inhibiting Wnt/beta-catenin signaling in osteoblasts. In addition plays a role in hippocampal development, working memory, auditory response, early fetal adrenal gland development and the female reproductive system. The sequence is that of Midkine from Mus musculus (Mouse).